The chain runs to 63 residues: Large ribosomal subunit protein bL32 (63 aa).

The protein belongs to the bacterial ribosomal protein bL32 family.

In Lacticaseibacillus paracasei (strain ATCC 334 / BCRC 17002 / CCUG 31169 / CIP 107868 / KCTC 3260 / NRRL B-441) (Lactobacillus paracasei), this protein is Large ribosomal subunit protein bL32.